The chain runs to 304 residues: MTNHKENEMSKSELLVVTGLSGAGKSVVIQCLEDIGYFCVDNLPPILLPKFVELMEQGNPSLQKVAIAIDLRGKELFKSLVEEIDAIKSRNDVIVDVMFLEAETEKLISRYKESRRAHPLNENGQMSLMDSILEEKQLLSNIRTIANYIVDTTQLTTKELKARVKEKFEDENFKSFSINVSSFGFKHGIQKDADLVFDVRFLPNPYYVEDLRPMTGEDEPVYHYVMKWKETEIFFEKLMDLLKFMIPGYKKEGKSQLVIAIGCTGGQHRSVALAKRIGEELTEIFDYNVYVHHRDAHIESGVRK.

Gly19–Ser26 provides a ligand contact to ATP. Asp70–Gly73 lines the GTP pocket.

It belongs to the RapZ-like family.

Functionally, displays ATPase and GTPase activities. This is Nucleotide-binding protein SH2124 from Staphylococcus haemolyticus (strain JCSC1435).